The sequence spans 811 residues: RFX-like DNA-binding protein RFX1 (811 aa).

2 disordered regions span residues 48–92 (EPTS…TYLP) and 111–156 (LLHQ…QRQP). The span at 51-70 (SRGSNDNSNGPSNGSSVNSN) shows a compositional bias: low complexity. Pro residues predominate over residues 140–149 (SPTPTQPPAQ). Phosphoserine is present on Ser173. A disordered region spans residues 181–222 (KSEETLNNNPPTAAKRTNTFPSIPSSTKKQKTSQEKRISSIS). Residues 185 to 204 (TLNNNPPTAAKRTNTFPSIP) are compositionally biased toward polar residues. The RFX-type winged-helix DNA-binding region spans 285–360 (ALLWLMKNCK…YHYCGLKLTV (76 aa)). Positions 377–391 (LVHNNDPISPLSSPS) are enriched in low complexity. The disordered stretch occupies residues 377–461 (LVHNNDPISP…AANNPTGTLS (85 aa)). Over residues 409-428 (NRKSLSRTGSPVKQSSNDNP) the composition is skewed to polar residues. Residues 434-445 (ESQHPNETEANK) show a composition bias toward basic and acidic residues.

Belongs to the RFX family.

The chain is RFX-like DNA-binding protein RFX1 (RFX1) from Saccharomyces cerevisiae (strain ATCC 204508 / S288c) (Baker's yeast).